The chain runs to 29 residues: Cytochrome b6-f complex subunit 8 (29 aa).

The chain crosses the membrane as a helical span at residues 3–23 (IVSLAWASLMVVFTFSLSLVV).

This sequence belongs to the PetN family. As to quaternary structure, the 4 large subunits of the cytochrome b6-f complex are cytochrome b6, subunit IV (17 kDa polypeptide, PetD), cytochrome f and the Rieske protein, while the 4 small subunits are PetG, PetL, PetM and PetN. The complex functions as a dimer.

It is found in the plastid. Its subcellular location is the chloroplast thylakoid membrane. In terms of biological role, component of the cytochrome b6-f complex, which mediates electron transfer between photosystem II (PSII) and photosystem I (PSI), cyclic electron flow around PSI, and state transitions. The protein is Cytochrome b6-f complex subunit 8 of Coffea arabica (Arabian coffee).